A 95-amino-acid chain; its full sequence is Integration host factor subunit beta (95 aa).

This sequence belongs to the bacterial histone-like protein family. As to quaternary structure, heterodimer of an alpha and a beta chain.

This protein is one of the two subunits of integration host factor, a specific DNA-binding protein that functions in genetic recombination as well as in transcriptional and translational control. This Ruegeria sp. (strain TM1040) (Silicibacter sp.) protein is Integration host factor subunit beta.